The chain runs to 431 residues: MQNIHFIGIGGIGISALARFLKEKGFKISGSDLKESKITKELEKEGVKVSIPHHKDNILNKDLVIYSAAIKEENPEFKHAKELGIKCLSRKEALPLILEDKRVFAVAGAHGKSTTSSILASLLDDASVIIGAILKEFGSNMIYKESQNLVFEADESDSSFLNSNPYLAIVTNAEAEHLDHYGNEVSKLHHAYAEFLDTAKIRVINAEDEFLKNYKNESTKLYPSKDIKNCTMRIENFKPFTSFELKDLGEFKVFGMGYHLALDASLAILAALNFLDIETIRTRLKNYQGIKKRFDILYADENLVLIDDYGHHPTEIKATLSAAQEYAKLGGYKKITAIFEPHRYTRLAANLKEFAKAFESIDELVILPVYAAGEEPIELDLKAVFPKALFVEDIKREGRFLVASKGQVFEEGLIIGFGAGDISNKLRQKDE.

ATP is bound at residue 108 to 114 (GAHGKST).

This sequence belongs to the MurCDEF family.

It is found in the cytoplasm. The enzyme catalyses UDP-N-acetyl-alpha-D-muramate + L-alanine + ATP = UDP-N-acetyl-alpha-D-muramoyl-L-alanine + ADP + phosphate + H(+). The protein operates within cell wall biogenesis; peptidoglycan biosynthesis. Functionally, cell wall formation. The protein is UDP-N-acetylmuramate--L-alanine ligase of Campylobacter jejuni (strain RM1221).